Here is a 1312-residue protein sequence, read N- to C-terminus: Rho GTPase-activating protein gacG (1312 aa).

Disordered stretches follow at residues 52–74 (VENNNNNNNNNNNSENNKYKRSQ), 111–158 (SNNN…SSSD), 314–519 (ISSS…PRNF), 762–831 (NSIS…SSTG), 1185–1230 (NNNN…SSSV), and 1282–1312 (TGTSETSIHSSNSPISSSISRSPSLTDIVEE). Low complexity-rich tracts occupy residues 53–67 (ENNNNNNNNNNNSEN) and 111–146 (SNNNNSSNSSCNSTPSTSPSSTPRSTNSPRSTYSPR). Polar residues predominate over residues 147–158 (NNNNNFTESSSD). Composition is skewed to low complexity over residues 328–355 (TTAAATGSSLSNSNSNSNLQNSQSANNS), 373–397 (HHSSLTHSNSNSNLISTNTSSIGNS), and 414–436 (LNLTENNLNNSSSTSSSPRNNGN). The segment covering 437-449 (EVIQSSSSTSSPR) has biased composition (polar residues). The span at 479–507 (SSTNSLNNSTSSLKSSNNNILQQQQQQQQ) shows a compositional bias: low complexity. 2 stretches are compositionally biased toward polar residues: residues 508 to 518 (HYDSAPTTPRN) and 763 to 776 (SISTNPLTNSGNIA). Positions 792–816 (NNNNNNNNNNNNNNNNNNNNNNNNN) are enriched in low complexity. Residues 1030-1212 (SKIDPITGFN…HHNSHHHRDN (183 aa)) form the Rho-GAP domain. The segment covering 1196 to 1210 (HHHHHHHHHNSHHHR) has biased composition (basic residues). 2 stretches are compositionally biased toward low complexity: residues 1213–1222 (NNNNSNNNSS) and 1282–1305 (TGTSETSIHSSNSPISSSISRSPS).

Its subcellular location is the cytoplasm. In terms of biological role, rho GTPase-activating protein involved in the signal transduction pathway. This is Rho GTPase-activating protein gacG (gacG) from Dictyostelium discoideum (Social amoeba).